Here is a 201-residue protein sequence, read N- to C-terminus: Dephospho-CoA kinase (201 aa).

Residues 6–201 (VMGLTGSIGM…RAIREKNPRG (196 aa)) form the DPCK domain. 14-19 (GMGKSA) contacts ATP.

The protein belongs to the CoaE family.

It localises to the cytoplasm. It catalyses the reaction 3'-dephospho-CoA + ATP = ADP + CoA + H(+). It participates in cofactor biosynthesis; coenzyme A biosynthesis; CoA from (R)-pantothenate: step 5/5. Catalyzes the phosphorylation of the 3'-hydroxyl group of dephosphocoenzyme A to form coenzyme A. The sequence is that of Dephospho-CoA kinase from Novosphingobium aromaticivorans (strain ATCC 700278 / DSM 12444 / CCUG 56034 / CIP 105152 / NBRC 16084 / F199).